The sequence spans 548 residues: MKLLHGLALVFLLAAASCKADEEITCEENNPFTCSNTDILSSKNFGKDFIFGVASSAYQIEGGRGRGVNVWDGFSHRYPEKAGSDLKNGDTTCESYTRWQKDVDVMGELNATGYRFSFAWSRIIPKGKVSRGVNQGGLDYYHKLIDALLEKNITPFVTLFHWDLPQTLQDEYEGFLDRQIIQDFKDYADLCFKEFGGKVKHWITINQLYTVPTRGYAIGTDAPGRCSPMVDTKHRCYGGNSSTEPYIVAHNQLLAHATVVDLYRTKYKFQKGKIGPVMITRWFLPFDESDPASIEAAERMNQFFHGWYMEPLTKGRYPDIMRQIVGSRLPNFTEEEAELVAGSYDFLGLNYYVTQYAQPKPNPYPSETHTAMMDAGVKLTYDNSRGEFLGPLFVEDKVNGNSYYYPKGIYYVMDYFKTKYGDPLIYVTENGFSTPSSENREQAIADYKRIDYLCSHLCFLRKVIKEKGVNVRGYFAWALGDNYEFCKGFTVRFGLSYVNWEDLDDRNLKESGKWYQRFINGTVKNAVKQDFLRSSLSSQSQKKRFADA.

A signal peptide spans 1 to 20 (MKLLHGLALVFLLAAASCKA). Intrachain disulfides connect Cys-26–Cys-458, Cys-34–Cys-454, and Cys-226–Cys-236. Gln-59 is a binding site for substrate. Residues His-76 and Asp-90 each contribute to the Zn(2+) site. Asn-110 is a glycosylation site (N-linked (GlcNAc...) asparagine). The substrate site is built by His-161 and Asn-206. Gln-207 serves as a coordination point for L-ascorbate. The N-linked (GlcNAc...) asparagine glycan is linked to Asn-240. Arg-281 contributes to the L-ascorbate binding site. Asn-331 carries an N-linked (GlcNAc...) asparagine glycan. Residue Tyr-352 participates in substrate binding. Glu-429 serves as the catalytic Nucleophile. Substrate contacts are provided by residues Trp-477 and 484-485 (EF). N-linked (GlcNAc...) asparagine glycosylation occurs at Asn-520.

The protein belongs to the glycosyl hydrolase 1 family. In terms of assembly, homodimer. In vacuoles called myrosin grains of a certain class of cells, myrosin cells, distributed in the cotyledons and the axis of the embryo as well as in different organs of the growing plant.

The protein localises to the vacuole. It catalyses the reaction a thioglucoside + H2O = a sugar + a thiol.. In terms of biological role, degradation of glucosinolates (glucose residue linked by a thioglucoside bound to an amino acid derivative) to glucose, sulfate and any of the products: thiocyanates, isothiocyanates, nitriles, epithionitriles or oxazolidine-2-thiones. The chain is Myrosinase from Brassica napus (Rape).